Consider the following 462-residue polypeptide: Gamma-glutamylethanolamide synthetase GlnA4 (462 aa).

The GS beta-grasp domain occupies 30 to 126 (GDIDTVVLAF…AVADLAWEDG (97 aa)). Residues 133–462 (PRQILRRQLE…WELRRSFERM (330 aa)) enclose the GS catalytic domain. Mg(2+) contacts are provided by Glu156 and Glu158. Glu214 lines the ATP pocket. Mg(2+) contacts are provided by Glu219 and Glu226. Position 270 (Gly270) interacts with L-glutamate. Mg(2+) is bound at residue His274. 276–278 (HLS) contacts ATP. Residues Arg325 and Arg343 each coordinate L-glutamate. ATP is bound by residues Arg343 and Arg348. Mg(2+) is bound at residue Glu359. L-glutamate is bound at residue Arg361.

Belongs to the glutamine synthetase family. The cofactor is Mg(2+).

The enzyme catalyses ethanolamine + L-glutamate + ATP = gamma-L-glutamylethanolamide + ADP + phosphate + H(+). The protein operates within amine and polyamine degradation; ethanolamine degradation. Very slightly decreased activity with glutamine synthetase (GS) inhibitor methionine sulfoximine (MSO). Its function is as follows. Involved in the catabolism of monoamine ethanolamine. Catalyzes the ATP-dependent gamma-glutamylation of ethanolamine. No activity with polyamines. No complementation of the L-glutamine auxotrophy of an E.coli glnA mutant. Enables survival of S.coelicolor under high local environmental ethanolamine conditions. May play a role during starvation conditions to limit intracellular ethanolamine concentration, which in excess is toxic to the cells. In Streptomyces coelicolor (strain ATCC BAA-471 / A3(2) / M145), this protein is Gamma-glutamylethanolamide synthetase GlnA4.